Here is a 159-residue protein sequence, read N- to C-terminus: MKAWGTVVVTLATLMVVTVDAKIYERCELAARLERAGLNGYKGYGVGDWLCMAHYESGFDTAFVDHNPDGSSEYGIFQLNSAWWCDNGITPTKNLCHMDCHDLLNRHILDDIRCAKQIVSSQNGLSAWTSWRLHCSGHDLSEWLKGCDMHVKIDPKIHP.

A signal peptide spans 1-21; it reads MKAWGTVVVTLATLMVVTVDA. The 129-residue stretch at 22-150 folds into the C-type lysozyme domain; it reads KIYERCELAA…SEWLKGCDMH (129 aa). Intrachain disulfides connect C27/C147, C51/C135, C85/C100, and C96/C114. Residue E56 is part of the active site.

The protein belongs to the glycosyl hydrolase 22 family.

It localises to the secreted. The enzyme catalyses Hydrolysis of (1-&gt;4)-beta-linkages between N-acetylmuramic acid and N-acetyl-D-glucosamine residues in a peptidoglycan and between N-acetyl-D-glucosamine residues in chitodextrins.. The protein is Sperm acrosome-associated protein 5 (SPACA5) of Homo sapiens (Human).